The chain runs to 382 residues: D-galactonate dehydratase (382 aa).

D183 contributes to the Mg(2+) binding site. The active-site Proton donor is H185. Residues E209 and E235 each contribute to the Mg(2+) site. The active-site Proton acceptor is the H285.

The protein belongs to the mandelate racemase/muconate lactonizing enzyme family. GalD subfamily. It depends on Mg(2+) as a cofactor.

The catalysed reaction is D-galactonate = 2-dehydro-3-deoxy-D-galactonate + H2O. The protein operates within carbohydrate acid metabolism; D-galactonate degradation; D-glyceraldehyde 3-phosphate and pyruvate from D-galactonate: step 1/3. Catalyzes the dehydration of D-galactonate to 2-keto-3-deoxy-D-galactonate. This is D-galactonate dehydratase from Salmonella paratyphi A (strain AKU_12601).